The sequence spans 677 residues: Mitochondrial disaggregase (677 aa).

A mitochondrion-targeting transit peptide spans 1 to 57 (MMLSAVLRRTAPAPRLFLGLIKSPSLQSRGGAYNRSVITGDRGEPQRLRTAAWVRPG). The segment at 64 to 103 (PGRGAATGGRRGERTEIPYLTAASSGRGPSPEETLPGQDS) is disordered. An autoinhibitory region spans residues 92–126 (PSPEETLPGQDSWNGVPNKAGLGMWALAMALVVQC). ANK repeat units lie at residues 133–162 (NKDAALMEAARANNVQEVRRLLSEGADVNA), 166–195 (LGWTALMVAAISHNESVVQVLLAAGADPNL), 235–265 (KGCTALHYAVLADDYSIVKELLGGGANPLQR), and 268–297 (MGHTPLDYAREGEVMKLLKTSETKYMEKQR). The ATP site is built by histidine 316, isoleucine 318, serine 353, glycine 354, isoleucine 355, glycine 356, lysine 357, threonine 358, glutamate 425, and asparagine 466. Residues 477 to 505 (LQLRQEALEMSRNRIAENLGDVQISDKIT) are regulatory; slows ATPase and disaggregase activities. Arginine 531 provides a ligand contact to ATP. Position 559 is an N6-acetyllysine (lysine 559). Residue arginine 590 coordinates ATP.

The protein belongs to the ClpA/ClpB family. As to quaternary structure, homododecamer when substrate-bound; the homododecamer consists of 2 homohexamers stacked head-to-head via ANK repeat-mediated interactions. The active substrate-bound form is likely to exist in a dynamic equilibrium between homohexamers and homododecamers. Homotetradecamer in the unbound state which is remodeled upon substrate binding into the homododecamer. Interacts with PHB and PHB2. Interacts with MAVS; the interaction is enhanced by Sendai virus infection. Post-translationally, proteolytically cleaved by protease PARL. ATP-dependent protein disaggregase activity is stimulated by PARL-mediated cleavage of the N-terminal autoinhibitory peptide.

The protein resides in the mitochondrion intermembrane space. The enzyme catalyses ATP + H2O = ADP + phosphate + H(+). Disaggregase activity is inhibited by ADP. Functions as a regulatory ATPase and participates in secretion/protein trafficking process. Has ATP-dependent protein disaggregase activity and is required to maintain the solubility of key mitochondrial proteins. Involved in mitochondrial-mediated antiviral innate immunity, activates RIG-I-mediated signal transduction and production of IFNB1 and pro-inflammatory cytokine IL6. Plays a role in granulocyte differentiation. This chain is Mitochondrial disaggregase, found in Rattus norvegicus (Rat).